Consider the following 456-residue polypeptide: UPF0210 protein Dde_3704 (456 aa).

Belongs to the UPF0210 family. As to quaternary structure, homodimer.

This Oleidesulfovibrio alaskensis (strain ATCC BAA-1058 / DSM 17464 / G20) (Desulfovibrio alaskensis) protein is UPF0210 protein Dde_3704.